The primary structure comprises 263 residues: HTH-type transcriptional repressor NanR (263 aa).

The interval 1 to 22 (MGLMNAFDSQTEDSSPAIGRNL) is disordered. Residues 30–98 (KKLSEMVEEE…NGERARVSRP (69 aa)) enclose the HTH gntR-type domain. The segment at residues 58 to 77 (ERELMAFFNVGRPSVREALA) is a DNA-binding region (H-T-H motif).

Belongs to the NanR family.

Functionally, transcriptional repressor that controls expression of the genes required for the catabolism of sialic acids. The polypeptide is HTH-type transcriptional repressor NanR (Escherichia coli (strain 55989 / EAEC)).